We begin with the raw amino-acid sequence, 435 residues long: Elongation factor 1-alpha (435 aa).

Residues 4-227 (KPHLNLIVIG…YLDQLELPPK (224 aa)) enclose the tr-type G domain. The interval 13 to 20 (GHIDHGKS) is G1. 13 to 20 (GHIDHGKS) contacts GTP. S20 contacts Mg(2+). A G2 region spans residues 69-73 (GVTIN). The tract at residues 90-93 (DAPG) is G3. Residues 90-94 (DAPGH) and 152-155 (NKMD) contribute to the GTP site. Positions 152 to 155 (NKMD) are G4. The interval 193-195 (VAP) is G5.

The protein belongs to the TRAFAC class translation factor GTPase superfamily. Classic translation factor GTPase family. EF-Tu/EF-1A subfamily.

The protein localises to the cytoplasm. The catalysed reaction is GTP + H2O = GDP + phosphate + H(+). Functionally, GTP hydrolase that promotes the GTP-dependent binding of aminoacyl-tRNA to the A-site of ribosomes during protein biosynthesis. The protein is Elongation factor 1-alpha of Saccharolobus solfataricus (strain ATCC 35092 / DSM 1617 / JCM 11322 / P2) (Sulfolobus solfataricus).